The primary structure comprises 153 residues: Regulatory protein RecX (153 aa).

This sequence belongs to the RecX family.

It localises to the cytoplasm. Functionally, modulates RecA activity. The polypeptide is Regulatory protein RecX (Mannheimia succiniciproducens (strain KCTC 0769BP / MBEL55E)).